Reading from the N-terminus, the 254-residue chain is L-rhamnose 1-dehydrogenase (NAD(P)(+)) (254 aa).

Positions 13, 15, 18, 64, 65, and 91 each coordinate NADP(+). The Proton donor role is filled by Ser-144. Beta-L-rhamnose contacts are provided by Ser-144, Ser-146, Gln-154, and Tyr-157. NADP(+) is bound by residues Tyr-157 and Lys-161. Tyr-157 functions as the Proton acceptor in the catalytic mechanism. Lys-161 serves as the catalytic Lowers pKa of active site Tyr. Beta-L-rhamnose is bound at residue Thr-189. Ile-190 is a binding site for NADP(+). Beta-L-rhamnose is bound at residue Asn-195.

The protein belongs to the short-chain dehydrogenases/reductases (SDR) family.

The enzyme catalyses L-rhamnofuranose + NAD(+) = L-rhamnono-1,4-lactone + NADH + H(+). It carries out the reaction L-rhamnofuranose + NADP(+) = L-rhamnono-1,4-lactone + NADPH + H(+). The protein operates within carbohydrate degradation; L-rhamnose degradation. In terms of biological role, NAD(P)-dependent dehydrogenase that catalyzes the oxidation of L-rhamnose to L-rhamnono-1,4-lactone. Also shows high activity with L-lyxose and low activity with L-mannose. Can utilize either NAD(+) or NADP(+), with a slight preference for NADP(+). Catalyzes the first step in an alternative pathway for rhamnose utilization that does not involve phosphorylated intermediates. This chain is L-rhamnose 1-dehydrogenase (NAD(P)(+)), found in Sphingomonas sp. (strain SKA58).